Reading from the N-terminus, the 262-residue chain is Steroid 5-alpha-reductase DET2 (262 aa).

Transmembrane regions (helical) follow at residues 13-33, 51-71, 79-99, 113-133, 148-168, and 205-225; these read CLLT…FLQA, IAWF…FPFG, SLLL…IYPL, FPIT…YIQA, WFWW…YINI, and AIEW…GFFL.

It belongs to the steroid 5-alpha reductase family.

The protein resides in the membrane. The catalysed reaction is a 3-oxo-5alpha-steroid + NADP(+) = a 3-oxo-Delta(4)-steroid + NADPH + H(+). It catalyses the reaction 5alpha-campestan-3-one + NADP(+) = campest-4-en-3-one + NADPH + H(+). The enzyme catalyses (22S,24R)-22-hydroxy-5alpha-ergostan-3-one + NADP(+) = (22S)-22-hydroxycampest-4-en-3-one + NADPH + H(+). It carries out the reaction 3-dehydro-6-deoxoteasterone + NADP(+) = (22R,23R)-22,23-dihydroxycampest-4-en-3-one + NADPH + H(+). It participates in plant hormone biosynthesis; brassinosteroid biosynthesis. Its activity is regulated as follows. Inhibited by the 4-azasteroids 4-MA. In terms of biological role, involved in a reduction step in the biosynthesis of the plant steroid, brassinolide (BL); acts at the second step in brassinolide biosynthesis in the 5alpha-reduction of (24R)- 24-methylcholest-4-en-3-one, which is further modified to form campestanol. Can use progesterone, testosterone, androstenedione and campestenone as substrate. Also catalyzes the conversion of campest-4-en-3-one (campesta-4-en-3-one, 4-en-3-one) to campest-3-one (campesta-3-one, 3-one), of (22S,24R)-22-hydroxyergost-4-en-3-one (22-hydroxy-campesta-4-en-3-one, 22-OH-4-en-3-one) to (22S,24R)-22-hydroxy-5alpha-ergostan-3-one (22-hydroxy-campesta-3-one, 22-OH-3-one), and of (22R,23R)-22,23-dihydroxy-5alpha-campestan-3-one (22,23,diOH-4-en-3-one) to (22R,23R)-22,23-dihydroxycampest-4-en-3-one (6-deoxo3DT). Required for the brassinosteroid- (BR) dependent regulation of seed size and shape as well as embryo development. The protein is Steroid 5-alpha-reductase DET2 of Arabidopsis thaliana (Mouse-ear cress).